The following is a 342-amino-acid chain: tRNA N6-adenosine threonylcarbamoyltransferase (342 aa).

Fe cation is bound by residues His-111 and His-115. Substrate is bound by residues 134-138, Asp-167, Gly-180, and Asn-274; that span reads LVSGG. Fe cation is bound at residue Asp-302.

Belongs to the KAE1 / TsaD family. The cofactor is Fe(2+).

Its subcellular location is the cytoplasm. The enzyme catalyses L-threonylcarbamoyladenylate + adenosine(37) in tRNA = N(6)-L-threonylcarbamoyladenosine(37) in tRNA + AMP + H(+). Required for the formation of a threonylcarbamoyl group on adenosine at position 37 (t(6)A37) in tRNAs that read codons beginning with adenine. Is involved in the transfer of the threonylcarbamoyl moiety of threonylcarbamoyl-AMP (TC-AMP) to the N6 group of A37, together with TsaE and TsaB. TsaD likely plays a direct catalytic role in this reaction. The protein is tRNA N6-adenosine threonylcarbamoyltransferase of Herminiimonas arsenicoxydans.